The sequence spans 459 residues: DnaJ protein homolog XDJ1 (459 aa).

Residues 7–79 (GDRLYDVLGV…KSHYDLYGDD (73 aa)) form the J domain. The CR-type zinc finger occupies 146–240 (GKKLKFDLKR…CAGLGLLSKK (95 aa)). 4 CXXCXGXG motif repeats span residues 159 to 166 (CIKCHGSG), 181 to 188 (CESCAGKG), 208 to 215 (CEKCNGKG), and 228 to 235 (CPDCAGLG).

It is found in the mitochondrion outer membrane. In Saccharomyces cerevisiae (strain ATCC 204508 / S288c) (Baker's yeast), this protein is DnaJ protein homolog XDJ1 (XDJ1).